A 438-amino-acid polypeptide reads, in one-letter code: 3-phosphoshikimate 1-carboxyvinyltransferase (438 aa).

Residues Lys21, Ser22, and Arg26 each coordinate 3-phosphoshikimate. Residue Lys21 coordinates phosphoenolpyruvate. Gly95 and Arg123 together coordinate phosphoenolpyruvate. Residues Ser167, Gln169, Asp315, and Lys342 each coordinate 3-phosphoshikimate. A phosphoenolpyruvate-binding site is contributed by Gln169. Asp315 acts as the Proton acceptor in catalysis. Phosphoenolpyruvate-binding residues include Arg346 and Arg387.

It belongs to the EPSP synthase family. In terms of assembly, monomer.

It is found in the cytoplasm. It carries out the reaction 3-phosphoshikimate + phosphoenolpyruvate = 5-O-(1-carboxyvinyl)-3-phosphoshikimate + phosphate. The protein operates within metabolic intermediate biosynthesis; chorismate biosynthesis; chorismate from D-erythrose 4-phosphate and phosphoenolpyruvate: step 6/7. Functionally, catalyzes the transfer of the enolpyruvyl moiety of phosphoenolpyruvate (PEP) to the 5-hydroxyl of shikimate-3-phosphate (S3P) to produce enolpyruvyl shikimate-3-phosphate and inorganic phosphate. This chain is 3-phosphoshikimate 1-carboxyvinyltransferase, found in Coxiella burnetii (strain RSA 331 / Henzerling II).